The sequence spans 272 residues: Shikimate dehydrogenase (NADP(+)) (272 aa).

Shikimate-binding positions include 14–16 (SLS) and threonine 61. Lysine 65 functions as the Proton acceptor in the catalytic mechanism. Aspartate 102 is a binding site for shikimate. NADP(+) is bound by residues 127-131 (GAGGA), 151-156 (NRTPSK), and leucine 215. Tyrosine 217 serves as a coordination point for shikimate. Glycine 239 contacts NADP(+).

Belongs to the shikimate dehydrogenase family. In terms of assembly, homodimer.

The enzyme catalyses shikimate + NADP(+) = 3-dehydroshikimate + NADPH + H(+). It functions in the pathway metabolic intermediate biosynthesis; chorismate biosynthesis; chorismate from D-erythrose 4-phosphate and phosphoenolpyruvate: step 4/7. Functionally, involved in the biosynthesis of the chorismate, which leads to the biosynthesis of aromatic amino acids. Catalyzes the reversible NADPH linked reduction of 3-dehydroshikimate (DHSA) to yield shikimate (SA). This is Shikimate dehydrogenase (NADP(+)) from Coxiella burnetii (strain CbuG_Q212) (Coxiella burnetii (strain Q212)).